We begin with the raw amino-acid sequence, 80 residues long: UPF0512 protein J (80 aa).

The protein belongs to the UPF0512 family.

The sequence is that of UPF0512 protein J from Dictyostelium discoideum (Social amoeba).